A 1850-amino-acid chain; its full sequence is Chitin synthase V (1850 aa).

The segment at 1 to 27 (MASTLPPLGGGNGGPHTQHSLPSLPAH) is disordered. Residues 1-779 (MASTLPPLGG…EIAGLVDGSA (779 aa)) enclose the Myosin motor domain. Residue 105-112 (GESGSGKS) participates in ATP binding. Residues N245, N290, N427, N481, and N558 are each glycosylated (N-linked (GlcNAc...) asparagine). Residues 289 to 309 (NNTSATGDDSGGFSHEGGQTS) are disordered. The interval 593-647 (SKPMRAPSVMSRKGGRGRGIASQRRQQESNLFDSGNTHAESRSPKGGNKGGIDQG) is disordered. The segment covering 620–630 (ESNLFDSGNTH) has biased composition (polar residues). The segment at 656–680 (LDNVQKAVTDPGTNAYFVFCLKPND) is actin-binding. A run of 2 helical transmembrane segments spans residues 884-904 (WVFT…RWIG) and 923-943 (MLIW…PMLI). The Cytochrome b5 heme-binding domain maps to 947 to 1006 (QNVFSAAELSSHNGKDGNSAYVSIRGHVIDLGSFADRHYPSFVSRKTMLNYAGMDVSSLF). 3 N-linked (GlcNAc...) asparagine glycosylation sites follow: N1033, N1058, and N1186. Residues 1196 to 1216 (LVLAVSILLVSVIAFKFFAAL) traverse the membrane as a helical segment. N-linked (GlcNAc...) asparagine glycans are attached at residues N1453 and N1559. Transmembrane regions (helical) follow at residues 1568 to 1588 (LIPM…VVFI), 1590 to 1610 (LLST…IVLV), 1617 to 1637 (VPIT…IIFI), and 1644 to 1664 (MVGW…GLPL). N1767 is a glycosylation site (N-linked (GlcNAc...) asparagine). Residues 1800-1850 (LPSDDALLAEIRDILKTADLMTVTKKGIKQELERRFDVPLDAKRAYINSGK) form the DEK-C domain.

It in the N-terminal section; belongs to the TRAFAC class myosin-kinesin ATPase superfamily. Myosin family. The protein in the C-terminal section; belongs to the chitin synthase family. Class V subfamily. In terms of tissue distribution, expressed in conidia and during appressorium formation.

It localises to the cell membrane. Its subcellular location is the cell septum. The protein localises to the cell tip. The catalysed reaction is [(1-&gt;4)-N-acetyl-beta-D-glucosaminyl](n) + UDP-N-acetyl-alpha-D-glucosamine = [(1-&gt;4)-N-acetyl-beta-D-glucosaminyl](n+1) + UDP + H(+). Polymerizes chitin, a structural polymer of the cell wall and septum, by transferring the sugar moiety of UDP-GlcNAc to the non-reducing end of the growing chitin polymer. Contributes to the production of conidia and the ability of fungal conidia to germinate. Involved in the fungal cell wall integrity and the ability of conidia to withstand biophysical pressure. Required for appressorium formation and evasion of insect cellular and/or humoral defenses, promoting the fungal dimorphic transition to the production of hyphal bodies that occurs within hosts, and ultimately to virulence. The sequence is that of Chitin synthase V from Metarhizium acridum (strain CQMa 102).